Here is a 152-residue protein sequence, read N- to C-terminus: 6,7-dimethyl-8-ribityllumazine synthase (152 aa).

Residues Phe-21, 55 to 57, and 79 to 81 contribute to the 5-amino-6-(D-ribitylamino)uracil site; these read AFE and CVI. Position 84–85 (84–85) interacts with (2S)-2-hydroxy-3-oxobutyl phosphate; the sequence is AT. His-87 acts as the Proton donor in catalysis. Phe-112 provides a ligand contact to 5-amino-6-(D-ribitylamino)uracil. (2S)-2-hydroxy-3-oxobutyl phosphate is bound at residue Arg-126.

The protein belongs to the DMRL synthase family. In terms of assembly, forms an icosahedral capsid composed of 60 subunits, arranged as a dodecamer of pentamers.

It catalyses the reaction (2S)-2-hydroxy-3-oxobutyl phosphate + 5-amino-6-(D-ribitylamino)uracil = 6,7-dimethyl-8-(1-D-ribityl)lumazine + phosphate + 2 H2O + H(+). The protein operates within cofactor biosynthesis; riboflavin biosynthesis; riboflavin from 2-hydroxy-3-oxobutyl phosphate and 5-amino-6-(D-ribitylamino)uracil: step 1/2. Catalyzes the formation of 6,7-dimethyl-8-ribityllumazine by condensation of 5-amino-6-(D-ribitylamino)uracil with 3,4-dihydroxy-2-butanone 4-phosphate. This is the penultimate step in the biosynthesis of riboflavin. This chain is 6,7-dimethyl-8-ribityllumazine synthase, found in Staphylococcus haemolyticus (strain JCSC1435).